The chain runs to 245 residues: UPF0246 protein Ldb2075 (245 aa).

The protein belongs to the UPF0246 family.

The chain is UPF0246 protein Ldb2075 from Lactobacillus delbrueckii subsp. bulgaricus (strain ATCC 11842 / DSM 20081 / BCRC 10696 / JCM 1002 / NBRC 13953 / NCIMB 11778 / NCTC 12712 / WDCM 00102 / Lb 14).